The chain runs to 181 residues: ATP synthase subunit delta (181 aa).

It belongs to the ATPase delta chain family. As to quaternary structure, F-type ATPases have 2 components, F(1) - the catalytic core - and F(0) - the membrane proton channel. F(1) has five subunits: alpha(3), beta(3), gamma(1), delta(1), epsilon(1). CF(0) has four main subunits: a(1), b(1), b'(1) and c(10-14). The alpha and beta chains form an alternating ring which encloses part of the gamma chain. F(1) is attached to F(0) by a central stalk formed by the gamma and epsilon chains, while a peripheral stalk is formed by the delta, b and b' chains.

It is found in the cellular thylakoid membrane. Functionally, f(1)F(0) ATP synthase produces ATP from ADP in the presence of a proton or sodium gradient. F-type ATPases consist of two structural domains, F(1) containing the extramembraneous catalytic core and F(0) containing the membrane proton channel, linked together by a central stalk and a peripheral stalk. During catalysis, ATP synthesis in the catalytic domain of F(1) is coupled via a rotary mechanism of the central stalk subunits to proton translocation. This protein is part of the stalk that links CF(0) to CF(1). It either transmits conformational changes from CF(0) to CF(1) or is implicated in proton conduction. This chain is ATP synthase subunit delta, found in Synechococcus sp. (strain RCC307).